The chain runs to 138 residues: Acidic phospholipase A2 1 (138 aa).

An N-terminal signal peptide occupies residues 1 to 16; it reads MRTLWIVAVWLMGVEG. Cystine bridges form between Cys42–Cys131, Cys44–Cys60, Cys59–Cys111, Cys65–Cys138, Cys66–Cys104, Cys73–Cys97, and Cys91–Cys102. Ca(2+) is bound by residues Tyr43, Gly45, and Gly47. Residue His63 is part of the active site. Residue Asp64 participates in Ca(2+) binding. Residue Asp105 is part of the active site.

As to quaternary structure, monomer. Requires Ca(2+) as cofactor. As to expression, expressed by the venom gland.

The protein localises to the secreted. It carries out the reaction a 1,2-diacyl-sn-glycero-3-phosphocholine + H2O = a 1-acyl-sn-glycero-3-phosphocholine + a fatty acid + H(+). Functionally, snake venom phospholipase that inhibits ADP- and collagen-induced human platelet aggregation. This inhibition is completely inhibited by abolition of catalytic activity in case of collagen as inducer and partially inhibited in case of ADP as inducer. PLA2 catalyzes the calcium-dependent hydrolysis of the 2-acyl groups in 3-sn-phosphoglycerides. In Macrovipera lebetinus (Levantine viper), this protein is Acidic phospholipase A2 1.